The chain runs to 151 residues: FAD synthase (151 aa).

ATP-binding positions include 12 to 13 (TF), 17 to 20 (HPGH), D97, and Y125.

The protein belongs to the archaeal FAD synthase family. As to quaternary structure, homodimer. Requires a divalent metal cation as cofactor.

It carries out the reaction FMN + ATP + H(+) = FAD + diphosphate. It functions in the pathway cofactor biosynthesis; FAD biosynthesis; FAD from FMN: step 1/1. In terms of biological role, catalyzes the transfer of the AMP portion of ATP to flavin mononucleotide (FMN) to produce flavin adenine dinucleotide (FAD) coenzyme. In Methanococcus vannielii (strain ATCC 35089 / DSM 1224 / JCM 13029 / OCM 148 / SB), this protein is FAD synthase.